We begin with the raw amino-acid sequence, 373 residues long: Putative 8-amino-7-oxononanoate synthase (373 aa).

Arg-18 provides a ligand contact to substrate. A pyridoxal 5'-phosphate-binding site is contributed by 93–94; the sequence is GF. His-118 lines the substrate pocket. Pyridoxal 5'-phosphate-binding positions include Ser-166, 191–194, and 220–223; these read DEAH and TLSK. N6-(pyridoxal phosphate)lysine is present on Lys-223. Thr-337 is a substrate binding site.

The protein belongs to the class-II pyridoxal-phosphate-dependent aminotransferase family. BioF subfamily. As to quaternary structure, homodimer. Requires pyridoxal 5'-phosphate as cofactor.

It catalyses the reaction 6-carboxyhexanoyl-[ACP] + L-alanine + H(+) = (8S)-8-amino-7-oxononanoate + holo-[ACP] + CO2. It functions in the pathway cofactor biosynthesis; biotin biosynthesis. Catalyzes the decarboxylative condensation of pimeloyl-[acyl-carrier protein] and L-alanine to produce 8-amino-7-oxononanoate (AON), [acyl-carrier protein], and carbon dioxide. The protein is Putative 8-amino-7-oxononanoate synthase (bioF) of Aquifex aeolicus (strain VF5).